The sequence spans 238 residues: Ribonuclease PH (238 aa).

Residues arginine 86 and 124–126 each bind phosphate; that span reads GTR.

It belongs to the RNase PH family. In terms of assembly, homohexameric ring arranged as a trimer of dimers.

The catalysed reaction is tRNA(n+1) + phosphate = tRNA(n) + a ribonucleoside 5'-diphosphate. Its function is as follows. Phosphorolytic 3'-5' exoribonuclease that plays an important role in tRNA 3'-end maturation. Removes nucleotide residues following the 3'-CCA terminus of tRNAs; can also add nucleotides to the ends of RNA molecules by using nucleoside diphosphates as substrates, but this may not be physiologically important. Probably plays a role in initiation of 16S rRNA degradation (leading to ribosome degradation) during starvation. The sequence is that of Ribonuclease PH from Halorhodospira halophila (strain DSM 244 / SL1) (Ectothiorhodospira halophila (strain DSM 244 / SL1)).